The following is a 644-amino-acid chain: Phosphomethylpyrimidine synthase (644 aa).

Substrate contacts are provided by residues Asn-236, Met-265, Tyr-294, His-330, Ser-350 to Gly-352, Asp-391 to Arg-394, and Glu-430. His-434 lines the Zn(2+) pocket. Residue Tyr-457 participates in substrate binding. His-498 contacts Zn(2+). Residues Cys-578, Cys-581, and Cys-586 each contribute to the [4Fe-4S] cluster site.

This sequence belongs to the ThiC family. In terms of assembly, homodimer. It depends on [4Fe-4S] cluster as a cofactor.

It catalyses the reaction 5-amino-1-(5-phospho-beta-D-ribosyl)imidazole + S-adenosyl-L-methionine = 4-amino-2-methyl-5-(phosphooxymethyl)pyrimidine + CO + 5'-deoxyadenosine + formate + L-methionine + 3 H(+). It participates in cofactor biosynthesis; thiamine diphosphate biosynthesis. Its function is as follows. Catalyzes the synthesis of the hydroxymethylpyrimidine phosphate (HMP-P) moiety of thiamine from aminoimidazole ribotide (AIR) in a radical S-adenosyl-L-methionine (SAM)-dependent reaction. This is Phosphomethylpyrimidine synthase from Aliivibrio fischeri (strain ATCC 700601 / ES114) (Vibrio fischeri).